Here is a 212-residue protein sequence, read N- to C-terminus: Large ribosomal subunit protein uL4 (212 aa).

This sequence belongs to the universal ribosomal protein uL4 family. As to quaternary structure, part of the 50S ribosomal subunit.

One of the primary rRNA binding proteins, this protein initially binds near the 5'-end of the 23S rRNA. It is important during the early stages of 50S assembly. It makes multiple contacts with different domains of the 23S rRNA in the assembled 50S subunit and ribosome. In terms of biological role, forms part of the polypeptide exit tunnel. This chain is Large ribosomal subunit protein uL4, found in Phenylobacterium zucineum (strain HLK1).